Consider the following 570-residue polypeptide: 4-coumarate--CoA ligase 4 (570 aa).

Positions 218, 219, 220, 221, 222, and 226 each coordinate ATP. Tyr-268 is a binding site for (E)-4-coumaroyl-AMP. Arg-289 provides a ligand contact to CoA. Residues 291 to 360 (ELNLVMELIQ…LKFPNAIFGQ (70 aa)) form an SBD1 region. Ala-338, Gln-360, Gly-361, and Thr-365 together coordinate (E)-4-coumaroyl-AMP. Gln-360, Gly-361, Thr-365, Asp-448, and Arg-463 together coordinate ATP. The interval 361–427 (GYGMTESGTV…VRGHQLMKGY (67 aa)) is SBD2. Residues Lys-465 and Lys-469 each contribute to the (E)-4-coumaroyl-AMP site. CoA is bound by residues Lys-471 and Gly-472. Residue Lys-554 coordinates ATP.

The protein belongs to the ATP-dependent AMP-binding enzyme family. It depends on Mg(2+) as a cofactor.

The enzyme catalyses (E)-sinapate + ATP + CoA = (E)-sinapoyl-CoA + AMP + diphosphate. The catalysed reaction is (E)-4-coumarate + ATP + CoA = (E)-4-coumaroyl-CoA + AMP + diphosphate. It catalyses the reaction (E)-caffeate + ATP + CoA = (E)-caffeoyl-CoA + AMP + diphosphate. It carries out the reaction (E)-ferulate + ATP + CoA = (E)-feruloyl-CoA + AMP + diphosphate. The enzyme catalyses (E)-sinapate + ATP + H(+) = (E)-sinapoyl-AMP + diphosphate. The catalysed reaction is (E)-sinapoyl-AMP + CoA = (E)-sinapoyl-CoA + AMP + H(+). It catalyses the reaction (E)-4-coumarate + ATP + H(+) = (E)-4-coumaroyl-AMP + diphosphate. It carries out the reaction (E)-4-coumaroyl-AMP + CoA = (E)-4-coumaroyl-CoA + AMP + H(+). The enzyme catalyses (E)-caffeate + ATP + H(+) = (E)-caffeoyl-AMP + diphosphate. The catalysed reaction is (E)-caffeoyl-AMP + CoA = (E)-caffeoyl-CoA + AMP + H(+). It catalyses the reaction (E)-ferulate + ATP + H(+) = (E)-feruloyl-AMP + diphosphate. It carries out the reaction (E)-feruloyl-AMP + CoA = (E)-feruloyl-CoA + AMP + H(+). Its pathway is phytoalexin biosynthesis; 3,4',5-trihydroxystilbene biosynthesis; 3,4',5-trihydroxystilbene from trans-4-coumarate: step 1/2. Produces CoA thioesters of a variety of hydroxy- and methoxy-substituted cinnamic acids, which are used to synthesize several phenylpropanoid-derived compounds, including anthocyanins, flavonoids, isoflavonoids, coumarins, lignin, suberin and wall-bound phenolics. Follows a two-step reaction mechanism, wherein the carboxylate substrate first undergoes adenylation by ATP, followed by a thioesterification in the presence of CoA to yield the final CoA thioesters. This is 4-coumarate--CoA ligase 4 from Arabidopsis thaliana (Mouse-ear cress).